Here is a 289-residue protein sequence, read N- to C-terminus: Mas-related G-protein coupled receptor member G (289 aa).

The Extracellular portion of the chain corresponds to 1-13; sequence MLSIFNIWGTFNR. A helical membrane pass occupies residues 14–34; sequence VLFFLSLTVSLAGLAGNTLLL. The Cytoplasmic segment spans residues 35-49; sequence WHLGLRIKKGPFNTY. A helical transmembrane segment spans residues 50-70; that stretch reads LLHLAAADFLFLSCQVGFSIA. The Extracellular segment spans residues 71 to 80; it reads KIASGYEDTL. The helical transmembrane segment at 81-101 threads the bilayer; sequence YFPVTFLWFAVGLWLLAAFIV. Residues 102 to 123 are Cytoplasmic-facing; that stretch reads DCCLSYMFPSFCGPNCRPRYTS. A helical membrane pass occupies residues 124 to 144; it reads FVLCLVIWALTMLAVLLPANA. Topologically, residues 145-164 are extracellular; sequence CGLLYNRMSLLVCLKYHWVS. The helical transmembrane segment at 165-185 threads the bilayer; sequence VVWLGVLASTACGASMFLLVF. Residues 186-200 lie on the Cytoplasmic side of the membrane; the sequence is GNCCSSQPPSKFCKL. A helical transmembrane segment spans residues 201-221; sequence AQCSGILLFFCRLPLVFYWCL. A topological domain (extracellular) is located at residue Arg-222. A helical transmembrane segment spans residues 223-243; it reads PVIKFLLPFFFPLATLLACID. Residues 244-289 are Cytoplasmic-facing; that stretch reads SSAKPLLYYLKGRQLRKEPLQVALNRALGEESQSSSGGISLPMSRV.

It belongs to the G-protein coupled receptor 1 family. Mas subfamily.

Its subcellular location is the cell membrane. Orphan receptor. May regulate nociceptor function and/or development, including the sensation or modulation of pain. This Rattus norvegicus (Rat) protein is Mas-related G-protein coupled receptor member G (Mrgprg).